We begin with the raw amino-acid sequence, 278 residues long: Extracellular metalloprotease MCYG_03238 (278 aa).

The first 19 residues, Met1 to Ala19, serve as a signal peptide directing secretion. N-linked (GlcNAc...) asparagine glycosylation occurs at Asn52. Position 170 (His170) interacts with Zn(2+). Glu171 is a catalytic residue. Residue His174 participates in Zn(2+) binding. An intrachain disulfide couples Cys209 to Cys255.

It belongs to the peptidase M43B family.

It localises to the secreted. Its function is as follows. Secreted metalloproteinase that allows assimilation of proteinaceous substrates. Plays a pivotal role as a pathogenicity determinant during infections and contributes to the ability of the pathogen to persist within the mammalian host. The chain is Extracellular metalloprotease MCYG_03238 from Arthroderma otae (strain ATCC MYA-4605 / CBS 113480) (Microsporum canis).